The primary structure comprises 348 residues: uncharacterized protein (348 aa).

The segment at 132–348 (SECRRSSDAL…QGTRRDSARL (217 aa)) is disordered. Over residues 161 to 178 (STAPIPNAAISSARSSAR) the composition is skewed to low complexity. Polar residues predominate over residues 192–207 (SRSSSETRSPGGTVQP). Over residues 227–273 (AAGSLLPAPRPPASSASSPQAAAPAAPSATRLPRRTTPSAPRPSSRP) the composition is skewed to low complexity. Residues 274–287 (ARPPIPAARPPPRR) are compositionally biased toward pro residues. A compositionally biased stretch (low complexity) spans 288-310 (TPGTPRPAAARARAPAGCSPARR).

This is an uncharacterized protein from Streptomyces fradiae (Streptomyces roseoflavus).